Consider the following 63-residue polypeptide: Large ribosomal subunit protein uL29 (63 aa).

This sequence belongs to the universal ribosomal protein uL29 family.

The sequence is that of Large ribosomal subunit protein uL29 from Vibrio cholerae serotype O1 (strain ATCC 39541 / Classical Ogawa 395 / O395).